The primary structure comprises 133 residues: Small ribosomal subunit protein uS9 (133 aa).

The tract at residues methionine 97 to arginine 133 is disordered. Over residues lysine 114–arginine 133 the composition is skewed to basic residues.

It belongs to the universal ribosomal protein uS9 family.

The sequence is that of Small ribosomal subunit protein uS9 (rpsI) from Chlamydia muridarum (strain MoPn / Nigg).